The sequence spans 811 residues: Leucine--tRNA ligase (811 aa).

Positions 40–50 match the 'HIGH' region motif; sequence PYPSGRLHMGH. The 'KMSKS' region motif lies at 579-583; it reads KMSKS. ATP is bound at residue Lys-582.

This sequence belongs to the class-I aminoacyl-tRNA synthetase family.

It localises to the cytoplasm. It carries out the reaction tRNA(Leu) + L-leucine + ATP = L-leucyl-tRNA(Leu) + AMP + diphosphate. The chain is Leucine--tRNA ligase from Campylobacter fetus subsp. fetus (strain 82-40).